The chain runs to 669 residues: Translation factor GUF1, mitochondrial (669 aa).

The N-terminal 49 residues, 1–49, are a transit peptide targeting the mitochondrion; the sequence is MWTLVGRGWGCARALAPRATGAALLVAPGPRSAPTLGAAPESWATDRLY. One can recognise a tr-type G domain in the interval 66-247; that stretch reads ENIRNFSIVA…AIIERIPPPK (182 aa). Residues 75–82, 140–144, and 194–197 contribute to the GTP site; these read AHVDHGKS, DTPGH, and NKID.

It belongs to the TRAFAC class translation factor GTPase superfamily. Classic translation factor GTPase family. LepA subfamily.

The protein localises to the mitochondrion inner membrane. The catalysed reaction is GTP + H2O = GDP + phosphate + H(+). Functionally, promotes mitochondrial protein synthesis. May act as a fidelity factor of the translation reaction, by catalyzing a one-codon backward translocation of tRNAs on improperly translocated ribosomes. Binds to mitochondrial ribosomes in a GTP-dependent manner. The polypeptide is Translation factor GUF1, mitochondrial (Homo sapiens (Human)).